The following is a 762-amino-acid chain: uncharacterized protein (762 aa).

One can recognise an MCM domain in the interval 334-542 (IIDILSNYLI…SDEEIAEHIL (209 aa)). 384–391 (TDPGIGKS) contributes to the ATP binding site.

Belongs to the MCM family.

This is an uncharacterized protein from Methanocaldococcus jannaschii (strain ATCC 43067 / DSM 2661 / JAL-1 / JCM 10045 / NBRC 100440) (Methanococcus jannaschii).